A 145-amino-acid chain; its full sequence is Small ribosomal subunit protein uS19 (145 aa).

Position 2 is an N-acetylalanine (Ala2). Lys108 participates in a covalent cross-link: Glycyl lysine isopeptide (Lys-Gly) (interchain with G-Cter in SUMO2).

Belongs to the universal ribosomal protein uS19 family. Component of the small ribosomal subunit.

It localises to the cytoplasm. In terms of biological role, component of the small ribosomal subunit. The ribosome is a large ribonucleoprotein complex responsible for the synthesis of proteins in the cell. This chain is Small ribosomal subunit protein uS19 (RPS15), found in Mesocricetus auratus (Golden hamster).